Consider the following 449-residue polypeptide: Phosphoglucosamine mutase (449 aa).

The active-site Phosphoserine intermediate is the serine 101. Serine 101, aspartate 243, aspartate 245, and aspartate 247 together coordinate Mg(2+). Serine 101 bears the Phosphoserine mark.

This sequence belongs to the phosphohexose mutase family. The cofactor is Mg(2+). In terms of processing, activated by phosphorylation.

It catalyses the reaction alpha-D-glucosamine 1-phosphate = D-glucosamine 6-phosphate. Its function is as follows. Catalyzes the conversion of glucosamine-6-phosphate to glucosamine-1-phosphate. The chain is Phosphoglucosamine mutase from Syntrophobacter fumaroxidans (strain DSM 10017 / MPOB).